The chain runs to 36 residues: Gloverin (36 aa).

It is found in the secreted. Functionally, antibacterial protein. In Heliothis virescens (Tobacco budworm moth), this protein is Gloverin.